The sequence spans 123 residues: Large ribosomal subunit protein uL29 (123 aa).

Belongs to the universal ribosomal protein uL29 family.

The chain is Large ribosomal subunit protein uL29 (rpl-35) from Caenorhabditis elegans.